We begin with the raw amino-acid sequence, 176 residues long: Membrane glycoprotein UL144 (176 aa).

The N-terminal stretch at 1 to 20 (MKPLIMLICFAVILLQLGVT) is a signal peptide. TNFR-Cys repeat units lie at residues 22–56 (VCQH…SVTC) and 58–95 (PCPN…NTVC). Disulfide bonds link Cys-23-Cys-34, Cys-35-Cys-48, Cys-38-Cys-56, Cys-59-Cys-71, Cys-74-Cys-87, and Cys-77-Cys-95. Residues 134-154 (LAWLSLFIFLVGIILLILYLI) traverse the membrane as a helical segment.

In terms of assembly, interacts with host TRIM23; this interaction causes auto-ubiquitination of TRAF6, leading to NF-kappaB activation.

Its subcellular location is the membrane. Its function is as follows. Activates NF-kappaB in a tumor necrosis factor receptor (TNFR)-associated factor 6 (TRAF6)-dependent manner, causing the up-regulation of the chemokine CCL22. This Homo sapiens (Human) protein is Membrane glycoprotein UL144 (UL144).